The following is a 196-amino-acid chain: C-type lectin domain family 3 member A (196 aa).

The first 22 residues, 1–22 (MAKNGLVLCILVVSLLLDQTDG), serve as a signal peptide directing secretion. Cystine bridges form between Cys68/Cys78, Cys95/Cys191, and Cys167/Cys183. In terms of domain architecture, C-type lectin spans 74–192 (VHKKCYLASE…CRSSKRYICE (119 aa)).

Its subcellular location is the secreted. Its function is as follows. Promotes cell adhesion to laminin and fibronectin. In Mus musculus (Mouse), this protein is C-type lectin domain family 3 member A (Clec3a).